We begin with the raw amino-acid sequence, 202 residues long: NADH-quinone oxidoreductase subunit C (202 aa).

The protein belongs to the complex I 30 kDa subunit family. As to quaternary structure, NDH-1 is composed of 14 different subunits. Subunits NuoB, C, D, E, F, and G constitute the peripheral sector of the complex.

The protein resides in the cell inner membrane. It catalyses the reaction a quinone + NADH + 5 H(+)(in) = a quinol + NAD(+) + 4 H(+)(out). Its function is as follows. NDH-1 shuttles electrons from NADH, via FMN and iron-sulfur (Fe-S) centers, to quinones in the respiratory chain. The immediate electron acceptor for the enzyme in this species is believed to be ubiquinone. Couples the redox reaction to proton translocation (for every two electrons transferred, four hydrogen ions are translocated across the cytoplasmic membrane), and thus conserves the redox energy in a proton gradient. The polypeptide is NADH-quinone oxidoreductase subunit C (Paracidovorax citrulli (strain AAC00-1) (Acidovorax citrulli)).